The following is a 348-amino-acid chain: Bifunctional nitrilase/nitrile hydratase NIT4B (348 aa).

One can recognise a CN hydrolase domain in the interval 29–300 (VRATVVQAST…EALISADLDL (272 aa)). Glu-69 functions as the Proton acceptor in the catalytic mechanism. Lys-156 (proton donor) is an active-site residue. The Nucleophile role is filled by Cys-190.

It belongs to the carbon-nitrogen hydrolase superfamily. Nitrilase family. In terms of tissue distribution, expressed in roots, stems, cotyledons, leaves and flowers.

The enzyme catalyses a nitrile + 2 H2O = a carboxylate + NH4(+). It carries out the reaction 3-cyano-L-alanine + 2 H2O = L-aspartate + NH4(+). Functionally, highly specific for beta-cyano-L-alanine (Ala(CN)). Low activity with 3-phenylpropionitrile (PPN). Not associated with auxin production but may be involved in cyanide detoxification. This chain is Bifunctional nitrilase/nitrile hydratase NIT4B (NIT4B), found in Nicotiana tabacum (Common tobacco).